A 235-amino-acid polypeptide reads, in one-letter code: MSRLGFEQFPDYQVPGMKHPDFSPYESNGGSIVAIAGDDFAVIAADTRLSSGYNIHSRTQSKLFKLSPQTVLGSAGCWADTLSLTGSIKVRMQSYEHTHLRTMTTEAVAQMLSIAMYNRRFFPYYVSNILAGIDNEGKGVVYSYDPIGHCEKATYRAGGTAGTLLQPVLDNQIGHKNMNLEDADKIKLTKERAVSVASDTFISAAERDIYTGDSVLINIITKDGIEVRTLTLRQD.

The propeptide occupies 1 to 20 (MSRLGFEQFPDYQVPGMKHP).

The protein belongs to the peptidase T1B family. The 26S proteasome consists of a 20S proteasome core and two 19S regulatory subunits. The 20S proteasome core is composed of 28 subunits that are arranged in four stacked rings, resulting in a barrel-shaped structure. The two end rings are each formed by seven alpha subunits, and the two central rings are each formed by seven beta subunits. The catalytic chamber with the active sites is on the inside of the barrel.

The protein resides in the cytoplasm. Its subcellular location is the nucleus. Its function is as follows. Non-catalytic component of the proteasome, a multicatalytic proteinase complex which is characterized by its ability to cleave peptides with Arg, Phe, Tyr, Leu, and Glu adjacent to the leaving group at neutral or slightly basic pH. The proteasome has an ATP-dependent proteolytic activity. The polypeptide is Proteasome subunit beta type-1 (Prosbeta6) (Drosophila melanogaster (Fruit fly)).